Consider the following 1180-residue polypeptide: IQ domain-containing protein N (1180 aa).

The interval 34 to 78 (HPPAPAHPSLLDKMEKAPPQPQHEGLKSKEHLPQQPAEGKTASRR) is disordered. Positions 103 to 132 (HARAATLIQANWRGYWLRQKLISQMMAAKA) constitute an IQ 1 domain. Disordered stretches follow at residues 283 to 324 (RVSA…ETPK), 476 to 496 (MSKT…PQTR), and 786 to 820 (QRLG…TQGG). 5 IQ domains span residues 926 to 955 (RILA…GAMV), 956 to 978 (IQAT…ATTT), 979 to 1001 (IQSA…MLHP), 1113 to 1142 (QDKA…AAKI), and 1143 to 1165 (VQAT…LLGP).

As to quaternary structure, interacts with calmodulin.

Essential for spermiogenesis and fertilization. May be required for manchette assembly in elongating spermatids. The polypeptide is IQ domain-containing protein N (Homo sapiens (Human)).